The following is a 456-amino-acid chain: Zinc finger C2HC domain-containing protein 1C (456 aa).

Disordered stretches follow at residues 16-46 and 85-113; these read MLPH…QSLK and YPHC…SSGP. Composition is skewed to polar residues over residues 35 to 46 and 90 to 102; these read YEQGDSSQQSLK and GISQ…DSQG. Positions 211–265 form a coiled coil; it reads VQIRRLEAAGESLEEEIRRKQILLRGKLKKTEEELRRIQTQKEQAKENENGELQK. The disordered stretch occupies residues 336–388; that stretch reads NKIRDPVSEPSVEKFSPPSETPVGALQGSARNSSLSMAPDSSGSSGSIEEPQL. Low complexity predominate over residues 368–382; the sequence is SSLSMAPDSSGSSGS. The C2HC/C3H-type zinc-finger motif lies at 387 to 416; the sequence is QLGECSHCGRKFLSFRLERHSNICSRMRGS. Zn(2+) is bound by residues cysteine 391, cysteine 394, histidine 406, and cysteine 410.

This sequence belongs to the ZC2HC1 family. The cofactor is Zn(2+).

This is Zinc finger C2HC domain-containing protein 1C (ZC2HC1C) from Homo sapiens (Human).